A 443-amino-acid chain; its full sequence is MGKEKTHINLVVIGHVDSGKSTTTGHIIYKLGGIDRRTIEKFEKESAEMGKGSFKYAWVLDKLKAERERGITIDIALWKFETPRYFFTVIDAPGHKDFIKNMITGTSQADVALLVVPADVGGFDGAFSKEGQTKEHVLLAFTLGVKQIVVGVNKMDTVKYSEDRYEEIKKEVKDYLKKVGYQADKVDFIPISGFEGDNLIEKSDKTPWYKGRTLIEALDTMQPPKRPYDKPLRIPLQGVYKIGGIGTVPVGRVETGILKAGMVLNFAPSAVVSECKSVEMHKEVLEEARPGDNIGFNVKNVSVKEIKRGYVASDTKNEPAKGCSKFTAQVIILNHPGEIKNGYTPLLDCHTSHISCKFLNIDSKIDKRSGKVVEENPKAIKSGDSALVSLEPKKPMVVETFTEYPPLGRFAIRDMRQTIAVGIINQLKRKNLGAVTAKAPAKK.

The 224-residue stretch at 5 to 228 (KTHINLVVIG…DTMQPPKRPY (224 aa)) folds into the tr-type G domain. The interval 14–21 (GHVDSGKS) is G1. 14–21 (GHVDSGKS) provides a ligand contact to GTP. The interval 70-74 (GITID) is G2. A G3 region spans residues 91-94 (DAPG). GTP is bound by residues 91 to 95 (DAPGH) and 153 to 156 (NKMD). Residues 153-156 (NKMD) are G4. Residues 192–194 (SGF) form a G5 region.

Belongs to the TRAFAC class translation factor GTPase superfamily. Classic translation factor GTPase family. EF-Tu/EF-1A subfamily.

It is found in the cytoplasm. In terms of biological role, this protein promotes the GTP-dependent binding of aminoacyl-tRNA to the A-site of ribosomes during protein biosynthesis. The protein is Elongation factor 1-alpha (MEF-1) of Plasmodium falciparum (isolate K1 / Thailand).